Here is a 106-residue protein sequence, read N- to C-terminus: Large ribosomal subunit protein uL23 (106 aa).

It belongs to the universal ribosomal protein uL23 family. In terms of assembly, part of the 50S ribosomal subunit. Contacts protein L29, and trigger factor when it is bound to the ribosome.

In terms of biological role, one of the early assembly proteins it binds 23S rRNA. One of the proteins that surrounds the polypeptide exit tunnel on the outside of the ribosome. Forms the main docking site for trigger factor binding to the ribosome. The sequence is that of Large ribosomal subunit protein uL23 from Neisseria meningitidis serogroup C / serotype 2a (strain ATCC 700532 / DSM 15464 / FAM18).